We begin with the raw amino-acid sequence, 246 residues long: Polyhedrin (246 aa).

It belongs to the polyhedrin family.

In terms of biological role, major component of the virus occlusion bodies, which are large proteinaceous structures (polyhedra), that protect the virus from the outside environment for extended periods until they are ingested by insect larvae. In Spodoptera exigua nuclear polyhedrosis virus (strain US) (SeMNPV), this protein is Polyhedrin (PH).